A 326-amino-acid polypeptide reads, in one-letter code: JNK1/MAPK8-associated membrane protein homolog (326 aa).

Topologically, residues 1 to 71 (MSSLSGHAST…CESCDTPLQP (71 aa)) are lumenal. An N-linked (GlcNAc...) asparagine glycan is attached at N27. Residues 72-92 (YDWMYLLFIALLPLLLHMQFI) traverse the membrane as a helical segment. Topologically, residues 93–108 (RIARKYCRTRYYEVSE) are cytoplasmic. A helical transmembrane segment spans residues 109–129 (YLCVILENVIACVIAVLIYPP). The Lumenal portion of the chain corresponds to 130–166 (RFTFFLNGCSKTDIKEWYPACYNPRIGYTKTMRCTYE). Residues 167 to 187 (VVFPLYSITFIHHLILIGSIL) traverse the membrane as a helical segment. Residues 188–208 (VLRSTLYCVLLYKTYNGKPFY) lie on the Cytoplasmic side of the membrane. The next 2 membrane-spanning stretches (helical) occupy residues 209 to 229 (AAIVSVPILAVIHAVLSGVVF) and 230 to 250 (YTFPYILLIGSLWAMCFHLAL). Residues 251 to 269 (EGKRPLKEMIVRIATSPTH) lie on the Cytoplasmic side of the membrane. Residues 270 to 290 (LIFLSITMLMLSFGVIAIIAP) traverse the membrane as a helical segment. Residues 291–296 (LDIPYR) are Lumenal-facing. The helical transmembrane segment at 297–317 (WSFLCIVPVPFIFYMATIPFS) threads the bilayer. At 318 to 326 (NPTTTMRLS) the chain is on the cytoplasmic side.

It localises to the endoplasmic reticulum membrane. Its function is as follows. Facilitates degradation of misfolded endoplasmic reticulum (ER) proteins through the recruitment of components of the proteasome and endoplasmic reticulum-associated degradation (ERAD) system. Involved in ER stress response. The chain is JNK1/MAPK8-associated membrane protein homolog from Caenorhabditis elegans.